We begin with the raw amino-acid sequence, 201 residues long: 3-isopropylmalate dehydratase small subunit (201 aa).

The protein belongs to the LeuD family. LeuD type 1 subfamily. Heterodimer of LeuC and LeuD.

It carries out the reaction (2R,3S)-3-isopropylmalate = (2S)-2-isopropylmalate. The protein operates within amino-acid biosynthesis; L-leucine biosynthesis; L-leucine from 3-methyl-2-oxobutanoate: step 2/4. Functionally, catalyzes the isomerization between 2-isopropylmalate and 3-isopropylmalate, via the formation of 2-isopropylmaleate. This is 3-isopropylmalate dehydratase small subunit from Rhizobium meliloti (strain 1021) (Ensifer meliloti).